Reading from the N-terminus, the 208-residue chain is Imidazole glycerol phosphate synthase subunit HisH (208 aa).

The 206-residue stretch at 1–206 (MFAIVDYDTG…KEMVSANDFS (206 aa)) folds into the Glutamine amidotransferase type-1 domain. Catalysis depends on C79, which acts as the Nucleophile. Residues H181 and E183 contribute to the active site.

As to quaternary structure, heterodimer of HisH and HisF.

The protein resides in the cytoplasm. The enzyme catalyses 5-[(5-phospho-1-deoxy-D-ribulos-1-ylimino)methylamino]-1-(5-phospho-beta-D-ribosyl)imidazole-4-carboxamide + L-glutamine = D-erythro-1-(imidazol-4-yl)glycerol 3-phosphate + 5-amino-1-(5-phospho-beta-D-ribosyl)imidazole-4-carboxamide + L-glutamate + H(+). It carries out the reaction L-glutamine + H2O = L-glutamate + NH4(+). It functions in the pathway amino-acid biosynthesis; L-histidine biosynthesis; L-histidine from 5-phospho-alpha-D-ribose 1-diphosphate: step 5/9. Its function is as follows. IGPS catalyzes the conversion of PRFAR and glutamine to IGP, AICAR and glutamate. The HisH subunit catalyzes the hydrolysis of glutamine to glutamate and ammonia as part of the synthesis of IGP and AICAR. The resulting ammonia molecule is channeled to the active site of HisF. This chain is Imidazole glycerol phosphate synthase subunit HisH, found in Lactiplantibacillus plantarum (strain ATCC BAA-793 / NCIMB 8826 / WCFS1) (Lactobacillus plantarum).